Consider the following 221-residue polypeptide: MIIAIDGPSASGKSSIARELSVKLGFKFISSGYLYRIITLIAQRSFISGCDFISENRLLNLVLENDISFNDSSFLLNGENVENQILNDKIDFQVSFYSSYIGIRNIVNKKLREVVKFSDDNYIIEGRDITTIVFPESEFKIYLDASIKVRALRRYKQRNGNETLEELERTLKIRDDVDKNKQYGKLELSKGVFYLDTSYKGLDDVCNIIIEKFNLKKVRER.

7-15 (GPSASGKSS) contacts ATP.

Belongs to the cytidylate kinase family. Type 1 subfamily.

It is found in the cytoplasm. The enzyme catalyses CMP + ATP = CDP + ADP. It carries out the reaction dCMP + ATP = dCDP + ADP. In Borreliella afzelii (strain PKo) (Borrelia afzelii), this protein is Cytidylate kinase 1.